Here is a 590-residue protein sequence, read N- to C-terminus: Nuclear receptor subfamily 2 group C member 1 (590 aa).

The interval 1-166 (MATIEEIAHQ…RLQRCIAFGM (166 aa)) is required for interaction with KAT2B. The nuclear receptor DNA-binding region spans 98 to 173 (FDLCVVCGDK…FGMKQDSVQC (76 aa)). 2 NR C4-type zinc fingers span residues 101-121 (CVVC…CEGC) and 137-156 (CRGS…CQYC). Ser185 and Ser203 each carry phosphoserine. Thr208 is modified (phosphothreonine). Residue Thr210 is modified to Phosphothreonine; by MAPK1. A Glycyl lysine isopeptide (Lys-Gly) (interchain with G-Cter in SUMO); alternate cross-link involves residue Lys238. Lys238 is covalently cross-linked (Glycyl lysine isopeptide (Lys-Gly) (interchain with G-Cter in SUMO2); alternate). Residues 333 to 577 (EGMEGSPHLI…SVIPHILKME (245 aa)) enclose the NR LBD domain. Phosphoserine; by PKC occurs at positions 461 and 568. The required for interaction with NRIP1 stretch occupies residues 571–590 (PHILKMEPADYNSQIIGHSL). Lys575 is covalently cross-linked (Glycyl lysine isopeptide (Lys-Gly) (interchain with G-Cter in SUMO2)).

This sequence belongs to the nuclear hormone receptor family. NR2 subfamily. In terms of assembly, homodimer. Heterodimer; with NR2C2 which is required for chromatin remodeling and for binding to promoter regions such as globin DR1 repeats. Interacts with ESR1; the interaction prevents homodimerization of ESR1 and suppresses its transcriptional activity and cell growth. Interacts with NRIP1 (via its LXXLL motifs); the interaction provides corepressor activity. Interacts with HDAC3 (via the DNA-binding domain); the interaction recruits phosphorylated NR2C1 to PML bodies for sumoylation. Interacts with HDAC4 (via the DNA-binding domain). Interacts with PIAS1; the interaction is required for sumoylation of NR2C1. Interacts with UBE2I; the interaction is required for sumoylation of NR2C1. Interacts with KAT2B; the interaction acts as a corepressor of gene expression. In terms of processing, sumoylation requires both PIAS1 and UBE2I. Sumoylation appears to dissociate NR2C1 from the PML nuclear bodies. Enhances the interaction with NRIP1 but inhibits interaction with KAT2B. In proliferating cells, stimulation by all-trans retinoic acid, activation of MAPK1-mediated phosphorylation and recruitment to PML bodies with subsequent sumoylation, suppresses OCT4 expression. Phosphorylated on several serine and threonine residues. Phosphorylation on Thr-210, stimulated by all-trans retinoic acid (atRA) mediates PML location and sumoylation in proliferating cells which then modulates its association with effector molecules, KAT2B and NRIP1. Phosphorylation on Ser-568 by PKC is important for protein stability and function as activator of RARB. As to expression, isoform 1 is highly expressed in the adlumenal compartment of the seminiferous tubule of adult testes (at protein level) and in the eyes of newborn animals. Weakly expressed in other adult organs including the seminal vesicle, prostate, ovary, adrenal gland, heart, thymus, placenta and brain. Expressed during embryonic stages in developing eyes, brain and cartilage primordia (at protein level). Also expressed in the developing spinal motor neurons and in the sympathetic-, parasympathetic- and sensory ganglia of the embryonic PNS. Expressed in the developing neural epithelia of the inner ear, nasal cavity, tongue and retina. At day 16.5, expressed in various tissues including kidney and intestine. In contrast, isoform 2 is widely expressed at a low level throughout the adult testis.

It localises to the nucleus. The protein resides in the PML body. Orphan nuclear receptor. Binds the IR7 element in the promoter of its own gene in an autoregulatory negative feedback mechanism. Primarily repressor of a broad range of genes including ESR1 and RARB. Together with NR2C2, forms the core of the DRED (direct repeat erythroid-definitive) complex that represses embryonic and fetal globin transcription. Binds to hormone response elements (HREs) consisting of two 5'-AGGTCA-3' half site direct repeat consensus sequences. Also activator of OCT4 gene expression. Plays a fundamental role in early embryogenesis and regulates embryonic stem cell proliferation and differentiation. Mediator of retinoic acid-regulated preadipocyte proliferation. The polypeptide is Nuclear receptor subfamily 2 group C member 1 (Mus musculus (Mouse)).